We begin with the raw amino-acid sequence, 145 residues long: D-aminoacyl-tRNA deacylase (145 aa).

Residues 137-138 (GP) carry the Gly-cisPro motif, important for rejection of L-amino acids motif.

This sequence belongs to the DTD family. As to quaternary structure, homodimer.

It localises to the cytoplasm. The enzyme catalyses glycyl-tRNA(Ala) + H2O = tRNA(Ala) + glycine + H(+). It catalyses the reaction a D-aminoacyl-tRNA + H2O = a tRNA + a D-alpha-amino acid + H(+). In terms of biological role, an aminoacyl-tRNA editing enzyme that deacylates mischarged D-aminoacyl-tRNAs. Also deacylates mischarged glycyl-tRNA(Ala), protecting cells against glycine mischarging by AlaRS. Acts via tRNA-based rather than protein-based catalysis; rejects L-amino acids rather than detecting D-amino acids in the active site. By recycling D-aminoacyl-tRNA to D-amino acids and free tRNA molecules, this enzyme counteracts the toxicity associated with the formation of D-aminoacyl-tRNA entities in vivo and helps enforce protein L-homochirality. This chain is D-aminoacyl-tRNA deacylase, found in Shewanella woodyi (strain ATCC 51908 / MS32).